We begin with the raw amino-acid sequence, 886 residues long: Peptidyl-lysine N-acetyltransferase Pat (886 aa).

The region spanning 487 to 523 (QPILHAYGLHTLPTWIASDSAEAVHIAEQIGYPVALK) is the ATP-grasp domain. An ATP-binding site is contributed by 513–524 (AEQIGYPVALKL). In terms of domain architecture, N-acetyltransferase spans 726 to 881 (CLFRPILPED…GIVGLTLNLA (156 aa)).

This sequence in the N-terminal section; belongs to the acetate CoA ligase alpha subunit family. In the central section; belongs to the acetate CoA ligase beta subunit family. In terms of assembly, monomer in the absence of acetyl-CoA. Oligomerizes to a tetrameric form in the presence of acetyl-CoA.

It carries out the reaction L-lysyl-[protein] + acetyl-CoA = N(6)-acetyl-L-lysyl-[protein] + CoA + H(+). With respect to regulation, exhibits positive cooperativity. It may be the result of acetyl-CoA binding to two distinct sites, or the result of subunit interactions. Acetylates and inactivates the acetyl-CoA synthase (Acs). Can also acetylate other central metabolic enzymes in response to environmental changes. In Salmonella typhimurium (strain LT2 / SGSC1412 / ATCC 700720), this protein is Peptidyl-lysine N-acetyltransferase Pat (pat).